Here is a 354-residue protein sequence, read N- to C-terminus: Clavesin-1 (354 aa).

The CRAL-TRIO domain maps to 118–279; it reads IKRALIDGFP…EFGGTLPPYD (162 aa). The tract at residues 333–354 is disordered; it reads AGTLKHEEKGENENTQPLLALD. Basic and acidic residues predominate over residues 335–344; it reads TLKHEEKGEN. Polar residues predominate over residues 345–354; sequence ENTQPLLALD.

As to quaternary structure, forms a complex with clathrin heavy chain and gamma-adaptin.

The protein resides in the golgi apparatus. Its subcellular location is the trans-Golgi network membrane. It is found in the early endosome membrane. The protein localises to the cytoplasmic vesicle. It localises to the clathrin-coated vesicle. Required for normal morphology of late endosomes and/or lysosomes in neurons. Binds phosphatidylinositol 3,5-bisphosphate (PtdIns(3,5)P2). In Pongo abelii (Sumatran orangutan), this protein is Clavesin-1 (CLVS1).